A 170-amino-acid chain; its full sequence is Inosine/xanthosine triphosphatase (170 aa).

The protein belongs to the YjjX NTPase family. Homodimer. Mg(2+) is required as a cofactor. Mn(2+) serves as cofactor.

It catalyses the reaction XTP + H2O = XDP + phosphate + H(+). The enzyme catalyses ITP + H2O = IDP + phosphate + H(+). In terms of biological role, phosphatase that hydrolyzes non-canonical purine nucleotides such as XTP and ITP to their respective diphosphate derivatives. Probably excludes non-canonical purines from DNA/RNA precursor pool, thus preventing their incorporation into DNA/RNA and avoiding chromosomal lesions. This Aliivibrio fischeri (strain MJ11) (Vibrio fischeri) protein is Inosine/xanthosine triphosphatase.